The sequence spans 994 residues: Valine--tRNA ligase (994 aa).

The 'HIGH' region motif lies at 43–53 (PNVTGTLHMGH). Positions 329-345 (QSGMPSGATSDTTNTPS) are enriched in polar residues. A disordered region spans residues 329–355 (QSGMPSGATSDTTNTPSDPEASSAANQ). A 'KMSKS' region motif is present at residues 585 to 589 (KMSKS). Position 588 (lysine 588) interacts with ATP. A disordered region spans residues 692–714 (AHSPAQHQAGQDGQDAPRTPQPR). Positions 696-707 (AQHQAGQDGQDA) are enriched in low complexity. Residues 928–994 (LIDVDAERVR…NGLRERRATL (67 aa)) are a coiled coil.

It belongs to the class-I aminoacyl-tRNA synthetase family. ValS type 1 subfamily. Monomer.

The protein resides in the cytoplasm. It carries out the reaction tRNA(Val) + L-valine + ATP = L-valyl-tRNA(Val) + AMP + diphosphate. Catalyzes the attachment of valine to tRNA(Val). As ValRS can inadvertently accommodate and process structurally similar amino acids such as threonine, to avoid such errors, it has a 'posttransfer' editing activity that hydrolyzes mischarged Thr-tRNA(Val) in a tRNA-dependent manner. This chain is Valine--tRNA ligase, found in Xylella fastidiosa (strain 9a5c).